Reading from the N-terminus, the 294-residue chain is C-type lectin domain family 4 member G (294 aa).

The Cytoplasmic portion of the chain corresponds to 1 to 30; that stretch reads MNTGEYNKLGSAIEEVSRGQLGRWECYKQR. The chain crosses the membrane as a helical; Signal-anchor for type II membrane protein span at residues 31–51; the sequence is LFFLVLALLVATVLWALILST. Residues 52-294 are Extracellular-facing; that stretch reads LLSSASSKLR…WICEKRSSCY (243 aa). An N-linked (GlcNAc...) asparagine glycan is attached at asparagine 73. Residues 100-151 adopt a coiled-coil conformation; it reads AQLQTTLAEFKDIQAKLMEQESILKELQERVTQDLAKASRDRENIRSELFQA. Asparagine 159, asparagine 246, and asparagine 256 each carry an N-linked (GlcNAc...) asparagine glycan. The region spanning 172-287 is the C-type lectin domain; the sequence is FQGSCYYFSE…CTNERDGWIC (116 aa). Cysteine 264 and cysteine 278 are joined by a disulfide.

The protein localises to the cell membrane. Functionally, binds mannose, N-acetylglucosamine (GlcNAc) and fucose, but not galactose, in a Ca(2+)-dependent manner. The sequence is that of C-type lectin domain family 4 member G (Clec4g) from Mus musculus (Mouse).